The sequence spans 337 residues: GTPase Obg (337 aa).

The Obg domain maps to Ser-4 to Leu-162. The OBG-type G domain occupies Ala-163 to Arg-329. Residues Gly-169–Ser-176, Phe-194–Glu-198, Asp-216–Gly-219, Ser-283–Asp-286, and Ser-310–Phe-312 each bind GTP. Mg(2+)-binding residues include Ser-176 and Thr-196.

The protein belongs to the TRAFAC class OBG-HflX-like GTPase superfamily. OBG GTPase family. In terms of assembly, monomer. Mg(2+) serves as cofactor.

The protein localises to the cytoplasm. An essential GTPase which binds GTP, GDP and possibly (p)ppGpp with moderate affinity, with high nucleotide exchange rates and a fairly low GTP hydrolysis rate. Plays a role in control of the cell cycle, stress response, ribosome biogenesis and in those bacteria that undergo differentiation, in morphogenesis control. This is GTPase Obg from Azobacteroides pseudotrichonymphae genomovar. CFP2.